Here is a 1034-residue protein sequence, read N- to C-terminus: Potassium-transporting ATPase alpha chain 1 (1034 aa).

Residues 1–97 (MGKAENYEMY…NALRPPRGTP (97 aa)) are Cytoplasmic-facing. Phosphotyrosine occurs at positions 7 and 10. The tract at residues 14–41 (LGPGPGGDMAAKMSKKKAGKGGGKKKEK) is disordered. Positions 26-39 (MSKKKAGKGGGKKK) are enriched in basic residues. Ser-27 carries the post-translational modification Phosphoserine. A helical membrane pass occupies residues 98–118 (EYVKFARQLAGGLQCLMWVAA). Topologically, residues 119-141 (AICLIAFAIQASEGDLTTDDNLY) are lumenal. Residues 142 to 162 (LALALIAVVVVTGCFGYYQEF) form a helical membrane-spanning segment. Over 163–298 (KSTNIIASFK…NEKTPIAIEI (136 aa)) the chain is Cytoplasmic. The segment covering 225–239 (NSSLTGESEPQTRSP) has biased composition (polar residues). Residues 225–245 (NSSLTGESEPQTRSPECTHES) form a disordered region. The helical transmembrane segment at 299–318 (EHFVDIIAGLAILFGATFFV) threads the bilayer. Residues 319–330 (VAMCIGYTFLRA) lie on the Lumenal side of the membrane. Residues 331-348 (MVFFMAIVVAYVPEGLLA) traverse the membrane as a helical segment. The K(+) site is built by Val-339, Ala-340, Val-342, and Glu-344. Residues 349–782 (TVTVCLSLTA…EQGRLIFDNL (434 aa)) are Cytoplasmic-facing. Asp-386 acts as the 4-aspartylphosphate intermediate in catalysis. Mg(2+) is bound by residues Asp-386 and Thr-388. Phosphoserine is present on residues Ser-462 and Ser-600. Positions 727 and 731 each coordinate Mg(2+). A helical transmembrane segment spans residues 783–802 (KKSIAYTLTKNIPELTPYLI). Glu-796 contacts K(+). Over 803-812 (YITVSVPLPL) the chain is Lumenal. The chain crosses the membrane as a helical span at residues 813–833 (GCITILFIELCTDIFPSVSLA). Glu-821 is a K(+) binding site. Over 834-853 (YEKAESDIMHLRPRNPKRDR) the chain is Cytoplasmic. At Ser-839 the chain carries Phosphoserine. A helical membrane pass occupies residues 854 to 876 (LVNEPLAAYSYFQIGAIQSFAGF). At 877–928 (TDYFTAMAQEGWFPLLCVGLRPYWENHHLQDLQDSYGQEWTFGQRLYQQYTC) the chain is on the lumenal side. Residues 929–948 (YTVFFISIEMCQIADVLIRK) form a helical membrane-spanning segment. Over 949–962 (TRRLSAFQQGFFRN) the chain is Cytoplasmic. Ser-953 is subject to Phosphoserine; by PKA. The helical transmembrane segment at 963–981 (RILVIAIVFQVCIGCFLCY) threads the bilayer. Topologically, residues 982-996 (CPGMPNIFNFMPIRY) are lumenal. The chain crosses the membrane as a helical span at residues 997-1017 (QWWLVPMPFGLLIFVYDEIRK). Residues 1018-1034 (LGVRCCPGSWWDQELYY) lie on the Cytoplasmic side of the membrane.

This sequence belongs to the cation transport ATPase (P-type) (TC 3.A.3) family. Type IIC subfamily. In terms of assembly, the gastric H(+)/K(+) ATPase pump is composed of the catalytic alpha subunit ATP4A and the regulatory beta subunit ATP4B. Interacts (via the P-domain) with ATP4B (via N-terminus); this interaction stabilizes the lumenal-open E2 conformation state and prevents the reverse reaction of the transport cycle.

Its subcellular location is the apical cell membrane. The catalysed reaction is K(+)(out) + ATP + H2O + H(+)(in) = K(+)(in) + ADP + phosphate + 2 H(+)(out). Its function is as follows. The catalytic subunit of the gastric H(+)/K(+) ATPase pump which transports H(+) ions in exchange for K(+) ions across the apical membrane of parietal cells. Uses ATP as an energy source to pump H(+) ions to the gastric lumen while transporting K(+) ion from the lumen into the cell. Remarkably generates a million-fold proton gradient across the gastric parietal cell membrane, acidifying the gastric juice down to pH 1. Within a transport cycle, the transfer of a H(+) ion across the membrane is coupled to ATP hydrolysis and is associated with a transient phosphorylation that shifts the pump conformation from inward-facing (E1) to outward-facing state (E2). The release of the H(+) ion in the stomach lumen is followed by binding of K(+) ion converting the pump conformation back to the E1 state. This Canis lupus familiaris (Dog) protein is Potassium-transporting ATPase alpha chain 1 (ATP4A).